Here is a 130-residue protein sequence, read N- to C-terminus: Small ribosomal subunit protein uS8 (130 aa).

This sequence belongs to the universal ribosomal protein uS8 family. As to quaternary structure, part of the 30S ribosomal subunit. Contacts proteins S5 and S12.

One of the primary rRNA binding proteins, it binds directly to 16S rRNA central domain where it helps coordinate assembly of the platform of the 30S subunit. This Cronobacter sakazakii (strain ATCC BAA-894) (Enterobacter sakazakii) protein is Small ribosomal subunit protein uS8.